A 459-amino-acid chain; its full sequence is D(1)-like dopamine receptor (459 aa).

At 1–23 (MAQNFSTVGDGKQMLLERDSSKR) the chain is on the extracellular side. Asn4 carries an N-linked (GlcNAc...) asparagine glycan. Residues 24-49 (VLTGCFLSLLIFTTLLGNTLVCVAVT) form a helical membrane-spanning segment. The Cytoplasmic portion of the chain corresponds to 50–60 (KFRHLRSKVTN). The helical transmembrane segment at 61–87 (FFVISLAISDLLVAILVMPWKAATEIM) threads the bilayer. Over 88–96 (GFWPFGEFC) the chain is Extracellular. Cys96 and Cys187 are oxidised to a cystine. Residues 97-119 (NIWVAFDIMCSTASILNLCVISV) form a helical membrane-spanning segment. Over 120–138 (DRYWAISSPFRYERKMTPK) the chain is Cytoplasmic. Residues 139–164 (VACLMISVAWTLSVLISFIPVQLNWH) form a helical membrane-spanning segment. Topologically, residues 165-191 (KAQTASYVELNGTYAGDLPPDNCDSSL) are extracellular. A helical membrane pass occupies residues 192–216 (NRTYAISSSLISFYIPVAIMIVTYT). At 217–269 (RIYRIAQKQIRRISALERAAESAQNRHSSMGNSLSMESECSFKMSFKRETKVL) the chain is on the cytoplasmic side. The chain crosses the membrane as a helical span at residues 270-297 (KTLSVIMGVFVCCWLPFFILNCMVPFCE). The Extracellular portion of the chain corresponds to 298–311 (ADDTTDFPCISSTT). A helical transmembrane segment spans residues 312 to 333 (FDVFVWFGWANSSLNPIIYAFN). The Cytoplasmic segment spans residues 334–459 (ADFRKAFSIL…QNGQHKSMSC (126 aa)).

The protein belongs to the G-protein coupled receptor 1 family.

The protein localises to the cell membrane. It is found in the cell projection. The protein resides in the cilium membrane. In terms of biological role, receptor for dopamine. The polypeptide is D(1)-like dopamine receptor (d14) (Takifugu rubripes (Japanese pufferfish)).